A 302-amino-acid chain; its full sequence is MKKNRLNLNGVVVINKAKDVSSNKVLQQLKYLFNAQKAGHTGTLDPMATGVLPICFGRATKIAQYLLDADKEYIATIRLGIETDSGDAEGEIIAKSPNIPELSAEYLETVLAKFRGDVVQIPPMYSALKYNGQPLYKLAREGKTVEVKSRNIKIYELELLEFDIDSLKIRVKCSKGTYIRSLAIDIGKTLGCGGHLIALQRTQSGPFKLSEAFRLEQLKDLSFEQKIASITNIESVFIDKPIYSLLEEEKDDLYKRGLFADKPHLDGTVRIYDDEKFVAIAEFDKGKLINKKFFDQDILISE.

D45 serves as the catalytic Nucleophile.

The protein belongs to the pseudouridine synthase TruB family. Type 1 subfamily.

It carries out the reaction uridine(55) in tRNA = pseudouridine(55) in tRNA. Functionally, responsible for synthesis of pseudouridine from uracil-55 in the psi GC loop of transfer RNAs. This is tRNA pseudouridine synthase B from Francisella tularensis subsp. novicida (strain U112).